Consider the following 151-residue polypeptide: Lipoprotein signal peptidase (151 aa).

Helical transmembrane passes span 33-53 (VIPD…FGLL), 58-78 (WIFI…QFKI), and 87-107 (LTLG…LFIG). Catalysis depends on residues Asp-111 and Asp-126. A helical membrane pass occupies residues 120-140 (FVFNFADSAIVVGVGLLMILM).

The protein belongs to the peptidase A8 family.

The protein localises to the cell membrane. The enzyme catalyses Release of signal peptides from bacterial membrane prolipoproteins. Hydrolyzes -Xaa-Yaa-Zaa-|-(S,diacylglyceryl)Cys-, in which Xaa is hydrophobic (preferably Leu), and Yaa (Ala or Ser) and Zaa (Gly or Ala) have small, neutral side chains.. It participates in protein modification; lipoprotein biosynthesis (signal peptide cleavage). This protein specifically catalyzes the removal of signal peptides from prolipoproteins. The protein is Lipoprotein signal peptidase of Desulfitobacterium hafniense (strain DSM 10664 / DCB-2).